Here is a 302-residue protein sequence, read N- to C-terminus: Sulfate adenylyltransferase subunit 2 (302 aa).

The disordered stretch occupies residues 280–302 (RQGRAIDHDQSGSMELKKRQGYF).

This sequence belongs to the PAPS reductase family. CysD subfamily. Heterodimer composed of CysD, the smaller subunit, and CysN.

It carries out the reaction sulfate + ATP + H(+) = adenosine 5'-phosphosulfate + diphosphate. It participates in sulfur metabolism; hydrogen sulfide biosynthesis; sulfite from sulfate: step 1/3. In terms of biological role, with CysN forms the ATP sulfurylase (ATPS) that catalyzes the adenylation of sulfate producing adenosine 5'-phosphosulfate (APS) and diphosphate, the first enzymatic step in sulfur assimilation pathway. APS synthesis involves the formation of a high-energy phosphoric-sulfuric acid anhydride bond driven by GTP hydrolysis by CysN coupled to ATP hydrolysis by CysD. The chain is Sulfate adenylyltransferase subunit 2 from Vibrio cholerae serotype O1 (strain ATCC 39541 / Classical Ogawa 395 / O395).